The following is a 63-amino-acid chain: Beta-defensin 3 (63 aa).

An N-terminal signal peptide occupies residues 1 to 20; it reads MRIHYLLFSFLLVLLSPLSA. The propeptide occupies 21–22; that stretch reads FS. Disulfide bonds link cysteine 31–cysteine 59, cysteine 38–cysteine 52, and cysteine 42–cysteine 60.

The protein belongs to the beta-defensin family.

It localises to the secreted. Functionally, has bactericidal activity. The chain is Beta-defensin 3 (Defb3) from Rattus norvegicus (Rat).